We begin with the raw amino-acid sequence, 393 residues long: Sialyltransferase-like protein 1 (393 aa).

The Cytoplasmic portion of the chain corresponds to 1–8; sequence MKRPLRRP. Residues 9–27 traverse the membrane as a helical; Signal-anchor for type II membrane protein segment; sequence FAVLLFVVLCAAASFPSVL. Residues 28–393 lie on the Lumenal side of the membrane; it reads RRSVGPAPVL…IAVPPVVFYH (366 aa). N-linked (GlcNAc...) asparagine glycans are attached at residues Asn-49, Asn-212, and Asn-258.

Belongs to the glycosyltransferase 29 family.

It is found in the golgi apparatus membrane. Possesses sialyltransferase-like activity in vitro. Transfers sialic acid to the oligosaccharide Gal-beta-1,3-GalNAc and to glycoproteins such as asialofetuin, alpha-1-acid glycoprotein (NeuAc-alpha-2,3-Gal-beta-1,3-GalNAc-) and andasialo-alpha-1-acid glycoprotein. The transferred sialic acid is linked to galactose of Gal-beta-1,3-GalNAc through alpha-2,6-linkage. The protein is Sialyltransferase-like protein 1 of Oryza sativa subsp. indica (Rice).